A 309-amino-acid polypeptide reads, in one-letter code: Formamidopyrimidine-DNA glycosylase (309 aa).

Pro2 serves as the catalytic Schiff-base intermediate with DNA. Glu3 serves as the catalytic Proton donor. Lys56 acts as the Proton donor; for beta-elimination activity in catalysis. Positions 106 and 129 each coordinate DNA. Residues 271-305 form an FPG-type zinc finger; that stretch reads NVYGRQGNACPHCESTLENIKLNGRASVYCPLCQP. The active-site Proton donor; for delta-elimination activity is the Arg295.

Belongs to the FPG family. In terms of assembly, monomer. Zn(2+) is required as a cofactor.

It catalyses the reaction Hydrolysis of DNA containing ring-opened 7-methylguanine residues, releasing 2,6-diamino-4-hydroxy-5-(N-methyl)formamidopyrimidine.. It carries out the reaction 2'-deoxyribonucleotide-(2'-deoxyribose 5'-phosphate)-2'-deoxyribonucleotide-DNA = a 3'-end 2'-deoxyribonucleotide-(2,3-dehydro-2,3-deoxyribose 5'-phosphate)-DNA + a 5'-end 5'-phospho-2'-deoxyribonucleoside-DNA + H(+). In terms of biological role, involved in base excision repair of DNA damaged by oxidation or by mutagenic agents. Acts as a DNA glycosylase that recognizes and removes damaged bases. Has a preference for oxidized purines, such as 7,8-dihydro-8-oxoguanine (8-oxoG). Has AP (apurinic/apyrimidinic) lyase activity and introduces nicks in the DNA strand. Cleaves the DNA backbone by beta-delta elimination to generate a single-strand break at the site of the removed base with both 3'- and 5'-phosphates. This chain is Formamidopyrimidine-DNA glycosylase, found in Psychrobacter arcticus (strain DSM 17307 / VKM B-2377 / 273-4).